Here is a 487-residue protein sequence, read N- to C-terminus: Photosystem II CP43 reaction center protein (487 aa).

A propeptide spanning residues 1 to 28 (MKVFVLGWLLKINLMKTLYSQRRFYHVE) is cleaved from the precursor. 5 helical membrane-spanning segments follow: residues 83–107 (LFEV…PHLA), 148–169 (LIGP…RDKN), 192–214 (KSLF…RFVS), 269–289 (KPFA…LSYS), and 305–326 (WYNN…ASQA). Glutamate 381 serves as a coordination point for [CaMn4O5] cluster. Residues 461–485 (RARAAAAGFEKGINRENEPVLSMRP) traverse the membrane as a helical segment.

It belongs to the PsbB/PsbC family. PsbC subfamily. In terms of assembly, PSII is composed of 1 copy each of membrane proteins PsbA, PsbB, PsbC, PsbD, PsbE, PsbF, PsbH, PsbI, PsbJ, PsbK, PsbL, PsbM, PsbT, PsbX, PsbY, PsbZ, Psb30/Ycf12, at least 3 peripheral proteins of the oxygen-evolving complex and a large number of cofactors. It forms dimeric complexes. Binds multiple chlorophylls and provides some of the ligands for the Ca-4Mn-5O cluster of the oxygen-evolving complex. It may also provide a ligand for a Cl- that is required for oxygen evolution. PSII binds additional chlorophylls, carotenoids and specific lipids. serves as cofactor.

The protein localises to the plastid. It localises to the chloroplast thylakoid membrane. One of the components of the core complex of photosystem II (PSII). It binds chlorophyll and helps catalyze the primary light-induced photochemical processes of PSII. PSII is a light-driven water:plastoquinone oxidoreductase, using light energy to abstract electrons from H(2)O, generating O(2) and a proton gradient subsequently used for ATP formation. This Porphyra purpurea (Red seaweed) protein is Photosystem II CP43 reaction center protein.